Here is a 202-residue protein sequence, read N- to C-terminus: Peptide deformylase 2 (202 aa).

Positions 123 and 165 each coordinate Fe cation. Glutamate 166 is an active-site residue. Residue histidine 169 participates in Fe cation binding.

It belongs to the polypeptide deformylase family. Fe(2+) serves as cofactor.

It carries out the reaction N-terminal N-formyl-L-methionyl-[peptide] + H2O = N-terminal L-methionyl-[peptide] + formate. Functionally, removes the formyl group from the N-terminal Met of newly synthesized proteins. Requires at least a dipeptide for an efficient rate of reaction. N-terminal L-methionine is a prerequisite for activity but the enzyme has broad specificity at other positions. In Vibrio vulnificus (strain YJ016), this protein is Peptide deformylase 2.